The sequence spans 479 residues: MNFETIIGLEVHVELNTNSKIFSPSSAHFGEDPNANTNVIDWSFPGVLPVMNKGVIDAGIKAALALNMDIHKEMHFDRKNYFYPDNPKAYQISQFDEPIGYNGWIEIKLEDGSTKKIRIERAHLEEDAGKNTHGTDGYSYVDLNRQGVPLIEIVSEADMRSPEEAYTYLTALKEIIQYTGISDVKMEEGSMRVDANISLRPYGQEQFGTKTELKNLNSFSNVRKGLEFEVERQAKLLRSGGVIRQETRRYDEANKGTILMRVKEGAADYRYFPEPDLPLYEIDDAWIDEMRAQLPQFPAQRRAKYEEELGLSAYDASQLTATKALSDFFETAVSLGGDAKQVSNWLQGEVAQFLNAEGKTIEEIRLTPDNLVEMIAIIADGTISSKMAKKVFVHLAKNGGSARAYVEKAGLVQISDPAVLVPIIHQVFADNEAAVADFKSGKRNADKAFTGFLMKATKGQANPQVAQQLLAQELQKLRD.

This sequence belongs to the GatB/GatE family. GatB subfamily. As to quaternary structure, heterotrimer of A, B and C subunits.

The catalysed reaction is L-glutamyl-tRNA(Gln) + L-glutamine + ATP + H2O = L-glutaminyl-tRNA(Gln) + L-glutamate + ADP + phosphate + H(+). It catalyses the reaction L-aspartyl-tRNA(Asn) + L-glutamine + ATP + H2O = L-asparaginyl-tRNA(Asn) + L-glutamate + ADP + phosphate + 2 H(+). In terms of biological role, allows the formation of correctly charged Asn-tRNA(Asn) or Gln-tRNA(Gln) through the transamidation of misacylated Asp-tRNA(Asn) or Glu-tRNA(Gln) in organisms which lack either or both of asparaginyl-tRNA or glutaminyl-tRNA synthetases. The reaction takes place in the presence of glutamine and ATP through an activated phospho-Asp-tRNA(Asn) or phospho-Glu-tRNA(Gln). This is Aspartyl/glutamyl-tRNA(Asn/Gln) amidotransferase subunit B from Streptococcus pyogenes serotype M5 (strain Manfredo).